Here is a 156-residue protein sequence, read N- to C-terminus: Small ribosomal subunit protein uS7 (156 aa).

It belongs to the universal ribosomal protein uS7 family. In terms of assembly, part of the 30S ribosomal subunit. Contacts proteins S9 and S11.

Its function is as follows. One of the primary rRNA binding proteins, it binds directly to 16S rRNA where it nucleates assembly of the head domain of the 30S subunit. Is located at the subunit interface close to the decoding center, probably blocks exit of the E-site tRNA. In Streptococcus agalactiae serotype Ia (strain ATCC 27591 / A909 / CDC SS700), this protein is Small ribosomal subunit protein uS7.